Here is a 96-residue protein sequence, read N- to C-terminus: Co-chaperonin GroES (96 aa).

This sequence belongs to the GroES chaperonin family. In terms of assembly, heptamer of 7 subunits arranged in a ring. Interacts with the chaperonin GroEL.

Its subcellular location is the cytoplasm. In terms of biological role, together with the chaperonin GroEL, plays an essential role in assisting protein folding. The GroEL-GroES system forms a nano-cage that allows encapsulation of the non-native substrate proteins and provides a physical environment optimized to promote and accelerate protein folding. GroES binds to the apical surface of the GroEL ring, thereby capping the opening of the GroEL channel. This Paraburkholderia phytofirmans (strain DSM 17436 / LMG 22146 / PsJN) (Burkholderia phytofirmans) protein is Co-chaperonin GroES.